A 141-amino-acid polypeptide reads, in one-letter code: Large ribosomal subunit protein uL16c (141 aa).

The span at 1-17 (MLSPKRTKYRKPHRGNR) shows a compositional bias: basic residues. Positions 1-21 (MLSPKRTKYRKPHRGNRKGQA) are disordered.

This sequence belongs to the universal ribosomal protein uL16 family. As to quaternary structure, part of the 50S ribosomal subunit.

It is found in the plastid. The protein resides in the chloroplast. This Ostreococcus tauri protein is Large ribosomal subunit protein uL16c.